We begin with the raw amino-acid sequence, 230 residues long: TorCAD operon transcriptional regulatory protein TorR (230 aa).

In terms of domain architecture, Response regulatory spans 4–117; the sequence is HIVIVEDEPV…ELVVRVKNLL (114 aa). At Asp-53 the chain carries 4-aspartylphosphate. The segment at residues 132 to 227 is a DNA-binding region (ompR/PhoB-type); the sequence is DNCYRFAGYC…QHGEGYFLAA (96 aa).

In terms of processing, phosphorylated and dephosphorylated by TorS.

The protein resides in the cytoplasm. Its function is as follows. Member of the two-component regulatory system TorS/TorR involved in the anaerobic utilization of trimethylamine-N-oxide (TMAO). Phosphorylated TorR activates the transcription of the torCAD operon by binding to four decameric boxes located in the torCAD promoter. Box1, 2 and 4 contain the DNA sequence 5'-CTGTTCATAT-3' and box3 contains the DNA sequence 5'-CCGTTCATCC-3'. Phosphorylated as well as unphosphorylated TorR negatively regulates its own expression by binding to box1 and 2. The polypeptide is TorCAD operon transcriptional regulatory protein TorR (torR) (Escherichia coli O157:H7).